A 347-amino-acid polypeptide reads, in one-letter code: 4-hydroxy-2-oxovalerate aldolase 2 (347 aa).

The 253-residue stretch at 7–259 (VRITDTSLRD…KTGIDFFDIA (253 aa)) folds into the Pyruvate carboxyltransferase domain. 15-16 (RD) serves as a coordination point for substrate. Residue D16 participates in Mn(2+) binding. The active-site Proton acceptor is H19. Residues S169 and H198 each contribute to the substrate site. Mn(2+)-binding residues include H198 and H200. Y289 lines the substrate pocket.

This sequence belongs to the 4-hydroxy-2-oxovalerate aldolase family.

The catalysed reaction is (S)-4-hydroxy-2-oxopentanoate = acetaldehyde + pyruvate. In Mycobacterium ulcerans (strain Agy99), this protein is 4-hydroxy-2-oxovalerate aldolase 2.